The primary structure comprises 378 residues: AT-hook motif nuclear-localized protein 5 (378 aa).

3 disordered regions span residues 30-70 (QVAS…AEHR), 88-160 (VQPT…GRKQ), and 302-378 (NNNK…LTRG). Residues 104 to 113 (VKKKRGRPRK) are compositionally biased toward basic residues. Positions 105-113 (KKKRGRPRK) match the Bipartite nuclear localization signal motif. 2 consecutive DNA-binding regions (a.T hook) follow at residues 105 to 117 (KKKR…YVPD) and 147 to 159 (KRAR…TGRK). In terms of domain architecture, PPC spans 171–314 (TSAGLAFAPH…KTIKQEIKPK (144 aa)). Polar residues-rich tracts occupy residues 316 to 327 (EPTNSEMETTPG) and 335 to 345 (STGQHTPQNFP).

As to quaternary structure, interacts with AHL29.

The protein localises to the nucleus. Functionally, transcription factor that specifically binds AT-rich DNA sequences related to the nuclear matrix attachment regions (MARs). The protein is AT-hook motif nuclear-localized protein 5 of Arabidopsis thaliana (Mouse-ear cress).